The chain runs to 198 residues: Na(+)-translocating NADH-quinone reductase subunit E (198 aa).

6 helical membrane-spanning segments follow: residues 11-31, 35-55, 77-97, 109-129, 140-160, and 176-196; these read AVFV…FLAV, VSTA…SVPA, FLNF…LEMI, LGIF…VSFM, IVYG…LAGI, and LGIT…FSGV.

This sequence belongs to the NqrDE/RnfAE family. As to quaternary structure, composed of six subunits; NqrA, NqrB, NqrC, NqrD, NqrE and NqrF.

Its subcellular location is the cell inner membrane. It catalyses the reaction a ubiquinone + n Na(+)(in) + NADH + H(+) = a ubiquinol + n Na(+)(out) + NAD(+). NQR complex catalyzes the reduction of ubiquinone-1 to ubiquinol by two successive reactions, coupled with the transport of Na(+) ions from the cytoplasm to the periplasm. NqrA to NqrE are probably involved in the second step, the conversion of ubisemiquinone to ubiquinol. This is Na(+)-translocating NADH-quinone reductase subunit E from Yersinia enterocolitica serotype O:8 / biotype 1B (strain NCTC 13174 / 8081).